We begin with the raw amino-acid sequence, 458 residues long: MENVITNNNKGLPKSILKFIPEPIQPLFENPFFSAGFGLIGVGSILAMGRKGFQQAMIQSRRYFFVSVEVPSKDKSFHWLMEWLATKKNKNTRHVSVETTFHQHESGDIVSRINFVPSVGTHYVFYRGRVIKVERSREKNVIDMNSGNLWESITLTTLGTGRQVFQNLIEEAKEMALEKEEGKTLIYTSMGTDWRRFGHPRRKRPISSVILDKGKSELIIQDVKKFLNNSDWYNDRGIPYRRGYLLYGPPGTGKSSFITALAGELQLSICILNLAGKSVSDTSLNQLLATAPQRSIILLEDIDSAIQTGNHDLSAKSNSANAPSISSGGLQYQGYYGNPSVSSGGSALTFSGLLNALDGVAASEGRILFMTTNHLEKLDKVLIRPGRVDLQIEIGLCSSYQMEQMFLKFYPTDFDLAKQFVEKLENYKFSPAQLQAYFMTYSNNSIEAINNLNELIKK.

The Mitochondrial intermembrane segment spans residues 1–26 (MENVITNNNKGLPKSILKFIPEPIQP). The helical transmembrane segment at 27-47 (LFENPFFSAGFGLIGVGSILA) threads the bilayer. The Mitochondrial matrix segment spans residues 48-458 (MGRKGFQQAM…INNLNELIKK (411 aa)). 248-255 (GPPGTGKS) serves as a coordination point for ATP.

It belongs to the AAA ATPase family. BCS1 subfamily.

It localises to the mitochondrion inner membrane. The catalysed reaction is ATP + H2O = ADP + phosphate + H(+). Its function is as follows. Chaperone necessary for the assembly of mitochondrial respiratory chain complex III. The sequence is that of Probable mitochondrial chaperone BCS1-B (bcsl1b) from Dictyostelium discoideum (Social amoeba).